The chain runs to 1066 residues: Thyrotropin-releasing hormone-degrading ectoenzyme (1066 aa).

Positions 1–14 (MALDGERGEQEEEK) are enriched in basic and acidic residues. A disordered region spans residues 1–43 (MALDGERGEQEEEKKKKKKKKKRKKKEEEGAEKSSSPFAATMG). The Cytoplasmic segment spans residues 1 to 81 (MALDGERGEQ…ERHIAVHKRL (81 aa)). The segment covering 15–25 (KKKKKKKKRKK) has biased composition (basic residues). At Thr71 the chain carries Phosphothreonine; by PKC. A helical; Signal-anchor for type II membrane protein membrane pass occupies residues 82 to 102 (VLAFAVSIVALLAVTMLAVLL). Residues 103 to 1066 (SLRFDECGAS…FQWLGKAMRH (964 aa)) lie on the Extracellular side of the membrane. The tract at residues 117–177 (GTDGGLGGFP…SEEEQEQWQP (61 aa)) is disordered. A compositionally biased stretch (gly residues) spans 118–127 (TDGGLGGFPE). A glycan (N-linked (GlcNAc...) asparagine) is linked at Asn131. Basic and acidic residues predominate over residues 143-154 (HAGEESSQREIG). Asn202, Asn217, Asn264, and Asn380 each carry an N-linked (GlcNAc...) asparagine glycan. Position 446–450 (446–450 (AAMEN)) interacts with substrate. His482 lines the Zn(2+) pocket. Catalysis depends on Glu483, which acts as the Proton acceptor. Residues His486 and Glu505 each coordinate Zn(2+). Residues Asn647, Asn676, Asn691, Asn705, Asn726, Asn842, and Asn948 are each glycosylated (N-linked (GlcNAc...) asparagine).

The protein belongs to the peptidase M1 family. As to quaternary structure, homodimer; disulfide-linked. It depends on Zn(2+) as a cofactor. In terms of tissue distribution, predominantly expressed in brain and pituitary. Lower levels in lung and liver.

It localises to the membrane. The enzyme catalyses Release of the N-terminal pyroglutamyl group from pGlu-|-His-Xaa tripeptides and pGlu-|-His-Xaa-Gly tetrapeptides.. Functionally, specific inactivation of TRH after its release. This Rattus norvegicus (Rat) protein is Thyrotropin-releasing hormone-degrading ectoenzyme (Trhde).